Reading from the N-terminus, the 196-residue chain is Potassium-transporting ATPase KdpC subunit (196 aa).

Residues 7–27 traverse the membrane as a helical segment; the sequence is PAIVSAGLFTVLLGLAYPLAV.

The protein belongs to the KdpC family. In terms of assembly, the system is composed of three essential subunits: KdpA, KdpB and KdpC.

It is found in the cell inner membrane. Part of the high-affinity ATP-driven potassium transport (or Kdp) system, which catalyzes the hydrolysis of ATP coupled with the electrogenic transport of potassium into the cytoplasm. This subunit acts as a catalytic chaperone that increases the ATP-binding affinity of the ATP-hydrolyzing subunit KdpB by the formation of a transient KdpB/KdpC/ATP ternary complex. The polypeptide is Potassium-transporting ATPase KdpC subunit (Caulobacter sp. (strain K31)).